An 89-amino-acid polypeptide reads, in one-letter code: MSITTEEKARVMKEYGTKDGDTGSPEVQVAILSSRIATLTEHFKTHKKDNHGRRGLLKLVAQRRKLLDYLKAKDEARYQSLIERLGLRR.

Residues 1 to 21 (MSITTEEKARVMKEYGTKDGD) show a composition bias toward basic and acidic residues. The segment at 1–24 (MSITTEEKARVMKEYGTKDGDTGS) is disordered.

This sequence belongs to the universal ribosomal protein uS15 family. Part of the 30S ribosomal subunit. Forms a bridge to the 50S subunit in the 70S ribosome, contacting the 23S rRNA.

Its function is as follows. One of the primary rRNA binding proteins, it binds directly to 16S rRNA where it helps nucleate assembly of the platform of the 30S subunit by binding and bridging several RNA helices of the 16S rRNA. Forms an intersubunit bridge (bridge B4) with the 23S rRNA of the 50S subunit in the ribosome. The chain is Small ribosomal subunit protein uS15 from Ruegeria pomeroyi (strain ATCC 700808 / DSM 15171 / DSS-3) (Silicibacter pomeroyi).